The sequence spans 601 residues: Translation initiation factor IF-2 (601 aa).

The segment at Gly-54 to Glu-101 is disordered. Positions Ala-57–Thr-89 are enriched in low complexity. Residues His-104–Arg-273 form the tr-type G domain. Residues Gly-113–Thr-120 form a G1 region. Gly-113–Thr-120 provides a ligand contact to GTP. Residues Gly-138–His-142 form a G2 region. The G3 stretch occupies residues Asp-159–Gly-162. Residues Asp-159–His-163 and Asn-213–Asp-216 contribute to the GTP site. The tract at residues Asn-213–Asp-216 is G4. The segment at Ser-249–Lys-251 is G5.

The protein belongs to the TRAFAC class translation factor GTPase superfamily. Classic translation factor GTPase family. IF-2 subfamily.

The protein resides in the cytoplasm. Its function is as follows. One of the essential components for the initiation of protein synthesis. Protects formylmethionyl-tRNA from spontaneous hydrolysis and promotes its binding to the 30S ribosomal subunits. Also involved in the hydrolysis of GTP during the formation of the 70S ribosomal complex. In Deinococcus geothermalis (strain DSM 11300 / CIP 105573 / AG-3a), this protein is Translation initiation factor IF-2.